Consider the following 771-residue polypeptide: Chaperone protein dnaK3 (771 aa).

T198 carries the phosphothreonine; by autocatalysis modification. Residues 624-771 (FDDDDDYYNR…GWDDDDDDWF (148 aa)) form a disordered region. 2 stretches are compositionally biased toward basic and acidic residues: residues 630 to 652 (YYNR…RYDD) and 708 to 734 (YDDR…RENA).

It belongs to the heat shock protein 70 family.

In terms of biological role, acts as a chaperone. The protein is Chaperone protein dnaK3 (dnaK3) of Synechocystis sp. (strain ATCC 27184 / PCC 6803 / Kazusa).